Here is a 521-residue protein sequence, read N- to C-terminus: Anthranilate synthase component 1 (521 aa).

L-tryptophan is bound by residues threonine 40 and 292 to 294; that span reads PYM. Chorismate is bound at residue 329 to 330; the sequence is GT. Glutamate 362 contributes to the Mg(2+) binding site. Chorismate-binding positions include tyrosine 450, arginine 470, 484-486, and glycine 486; that span reads GAG. Glutamate 499 lines the Mg(2+) pocket.

Belongs to the anthranilate synthase component I family. Heterotetramer consisting of two non-identical subunits: a beta subunit (TrpG) and a large alpha subunit (TrpE). It depends on Mg(2+) as a cofactor.

It carries out the reaction chorismate + L-glutamine = anthranilate + pyruvate + L-glutamate + H(+). It functions in the pathway amino-acid biosynthesis; L-tryptophan biosynthesis; L-tryptophan from chorismate: step 1/5. Its activity is regulated as follows. Feedback inhibited by tryptophan. In terms of biological role, part of a heterotetrameric complex that catalyzes the two-step biosynthesis of anthranilate, an intermediate in the biosynthesis of L-tryptophan. In the first step, the glutamine-binding beta subunit (TrpG) of anthranilate synthase (AS) provides the glutamine amidotransferase activity which generates ammonia as a substrate that, along with chorismate, is used in the second step, catalyzed by the large alpha subunit of AS (TrpE) to produce anthranilate. In the absence of TrpG, TrpE can synthesize anthranilate directly from chorismate and high concentrations of ammonia. In Buchnera aphidicola subsp. Acyrthosiphon pisum (strain APS) (Acyrthosiphon pisum symbiotic bacterium), this protein is Anthranilate synthase component 1 (trpE).